We begin with the raw amino-acid sequence, 233 residues long: LexA repressor (233 aa).

Residues 26-46 (FDEMKDALDLRSKSGIHRLIT) constitute a DNA-binding region (H-T-H motif). Active-site for autocatalytic cleavage activity residues include serine 154 and lysine 192.

This sequence belongs to the peptidase S24 family. In terms of assembly, homodimer.

The enzyme catalyses Hydrolysis of Ala-|-Gly bond in repressor LexA.. Functionally, represses a number of genes involved in the response to DNA damage (SOS response), including recA and lexA. In the presence of single-stranded DNA, RecA interacts with LexA causing an autocatalytic cleavage which disrupts the DNA-binding part of LexA, leading to derepression of the SOS regulon and eventually DNA repair. This is LexA repressor from Nitrobacter winogradskyi (strain ATCC 25391 / DSM 10237 / CIP 104748 / NCIMB 11846 / Nb-255).